The primary structure comprises 576 residues: MSRQSSVSFRSGGSRSFSAASAITPSVSRTTFSSVSRSGGGGGRVSLGGAYGAGGYGSRSLYNVGGSKRISFSSGGGSFRNQFGAGAGGGYGFGGGAGSGFGFGGGAGSGFGFGGGAGFGGGYGGAGFPVCPPGGIQEVTVNQNLLTPLNLQIDPTIQRVRTEEREQIKTLNNKFASFIDKVRFLEQQNKVLDTKWTLLQEQGTKTIKQNLDPLFEQYINNLRRQLDGVMGERGRLDSELRNMQDLVEDYKNKYEDEINKRTTAENEFVMLKKDVDAAYMNKVELEAKVDALMDEINFMKMFFDAELSQMQTHVSDTSVVLSMDNNRSLDLDSIIAEVKAQYEDIANRSRTEAESWYQTKYEELQQTAGRHGDDLRNTKHEISEMNRMIQRLRSEIDNVKKQCANLQNAIAEAEQRGELALKDARNKLTELEEALQKAKQDMARLLREYQELMNTKLALDVEIATYRKLLEGEECRLSGEGVGPVNISVVTNSLSSGYGGRSNIGYGSGLGSGIGGFASDIGPLLNRRGLGSGLSVGGSGFSASSGQGGGFSSGGGSSSSVKFVSTTSSSRRSFKS.

The segment at 1-163 is head; that stretch reads MSRQSSVSFR…DPTIQRVRTE (163 aa). Phosphoserine occurs at positions 5, 8, 16, and 21. Thr-24 is modified (phosphothreonine; by CDK1). A phosphoserine mark is found at Ser-26, Ser-36, Ser-46, Ser-60, Ser-67, Ser-71, Ser-74, and Ser-78. Phosphothreonine; by CDK1 is present on Thr-147. Thr-162 is modified (phosphothreonine; by AURKB). Residues 164-199 are coil 1A; the sequence is EREQIKTLNNKFASFIDKVRFLEQQNKVLDTKWTLL. The region spanning 164-477 is the IF rod domain; it reads EREQIKTLNN…KLLEGEECRL (314 aa). The interval 200–218 is linker 1; the sequence is QEQGTKTIKQNLDPLFEQY. Residues 219-311 form a coil 1B region; it reads INNLRRQLDG…FFDAELSQMQ (93 aa). The linker 12 stretch occupies residues 312 to 334; that stretch reads THVSDTSVVLSMDNNRSLDLDSI. The interval 335 to 473 is coil 2; sequence IAEVKAQYED…ATYRKLLEGE (139 aa). Positions 474–576 are tail; the sequence is ECRLSGEGVG…TSSSRRSFKS (103 aa). Residue Arg-527 is modified to Omega-N-methylarginine. The span at 540-557 shows a compositional bias: gly residues; the sequence is GFSASSGQGGGFSSGGGS. Positions 540–576 are disordered; sequence GFSASSGQGGGFSSGGGSSSSVKFVSTTSSSRRSFKS. The span at 558–576 shows a compositional bias: low complexity; that stretch reads SSSVKFVSTTSSSRRSFKS.

This sequence belongs to the intermediate filament family. In terms of assembly, heterodimer of a type I and a type II keratin. Heterodimer with type I keratin KRT25 leading to the formation of keratin intermediate filament (KIF) network. Forms a heterodimer (via 2B domains) with KRT14 (via 2B domains). Interacts with TCHP. Interacts with EPPK1. Interacts with AMELX. Interacts with PKP1 (via N-terminus) and PKP2. Post-translationally, phosphorylated by CDK1, AURKB and Rho-kinase, phosphorylation is regulated by the cell cycle. Thr-24 phosphorylation, mediated by CDK1, peaks during prometaphase or metaphase cells with phosphorylated filamentous structures evident throughout the cytoplasm during early mitosis. CDK1 phosphorylates Thr-24 in mitotic cells at the site of injury. In terms of processing, O-glycosylated. In terms of tissue distribution, expressed in the epidermis (at protein level) and testis (within pachytene spermatocytes).

The protein resides in the cytoplasm. Its function is as follows. Required for the formation of keratin intermediate filaments in the basal epidermis and maintenance of the skin barrier in response to mechanical stress. Regulates the recruitment of Langerhans cells to the epidermis, potentially by modulation of the abundance of macrophage chemotactic cytokines, macrophage inflammatory cytokines and CTNND1 localization in keratinocytes. This chain is Keratin, type II cytoskeletal 5, found in Rattus norvegicus (Rat).